The following is a 158-amino-acid chain: Glutamyl-tRNA(Gln) amidotransferase subunit C, mitochondrial (158 aa).

The protein belongs to the GatC family. In terms of assembly, subunit of the heterotrimeric GatCAB amidotransferase (AdT) complex, composed of A, B and C subunits.

It is found in the mitochondrion. The enzyme catalyses L-glutamyl-tRNA(Gln) + L-glutamine + ATP + H2O = L-glutaminyl-tRNA(Gln) + L-glutamate + ADP + phosphate + H(+). Allows the formation of correctly charged Gln-tRNA(Gln) through the transamidation of misacylated Glu-tRNA(Gln) in the mitochondria. The reaction takes place in the presence of glutamine and ATP through an activated gamma-phospho-Glu-tRNA(Gln). The polypeptide is Glutamyl-tRNA(Gln) amidotransferase subunit C, mitochondrial (Drosophila grimshawi (Hawaiian fruit fly)).